The following is a 216-amino-acid chain: CRIB domain-containing protein RIC7 (216 aa).

The region spanning 36–49 is the CRIB domain; it reads IGNPTDVKHVAHIG. Residues 52 to 216 form a disordered region; that stretch reads GPSDNATAPS…PQFEDDRNGF (165 aa). A compositionally biased stretch (basic and acidic residues) spans 108–121; it reads SSSEKGSPTKERSD.

In terms of assembly, interacts with ARAC4/ROP2 and ARAC11/ROP1. As to expression, expressed in roots, leaves, guard cells, stems, flowers, siliques and pollen.

It localises to the nucleus. The protein localises to the cytoplasm. Its subcellular location is the cell membrane. Its function is as follows. Functions as a downstream effector of Rho-related GTP binding proteins of the 'Rho of Plants' (ROPs) family. Participates in the propagation of ROP GTPase signals in specific cellular responses. Functions as a downstream effector of active ARAC4/ROP2 GTPase which is involved in the prevention of excessive stomatal opening upon light stimulation. Is involved in pollen tube growth regulation through its interaction with ARAC11/ROP1. This Arabidopsis thaliana (Mouse-ear cress) protein is CRIB domain-containing protein RIC7 (RIC7).